A 201-amino-acid chain; its full sequence is Holliday junction branch migration complex subunit RuvA (201 aa).

The interval 1 to 64 (MFAFLRGELV…EDAQQLFGFL (64 aa)) is domain I. The interval 65–143 (DEEELQLFRL…KIQPAASGKT (79 aa)) is domain II. A flexible linker region spans residues 144-154 (AGAPQALQLNE). The interval 154-201 (EDALAALMTLGFPKPAAQKAISGILETSPGLSVEEVVRAALIAIHNNF) is domain III.

This sequence belongs to the RuvA family. Homotetramer. Forms an RuvA(8)-RuvB(12)-Holliday junction (HJ) complex. HJ DNA is sandwiched between 2 RuvA tetramers; dsDNA enters through RuvA and exits via RuvB. An RuvB hexamer assembles on each DNA strand where it exits the tetramer. Each RuvB hexamer is contacted by two RuvA subunits (via domain III) on 2 adjacent RuvB subunits; this complex drives branch migration. In the full resolvosome a probable DNA-RuvA(4)-RuvB(12)-RuvC(2) complex forms which resolves the HJ.

It is found in the cytoplasm. In terms of biological role, the RuvA-RuvB-RuvC complex processes Holliday junction (HJ) DNA during genetic recombination and DNA repair, while the RuvA-RuvB complex plays an important role in the rescue of blocked DNA replication forks via replication fork reversal (RFR). RuvA specifically binds to HJ cruciform DNA, conferring on it an open structure. The RuvB hexamer acts as an ATP-dependent pump, pulling dsDNA into and through the RuvAB complex. HJ branch migration allows RuvC to scan DNA until it finds its consensus sequence, where it cleaves and resolves the cruciform DNA. The polypeptide is Holliday junction branch migration complex subunit RuvA (Chlorobaculum tepidum (strain ATCC 49652 / DSM 12025 / NBRC 103806 / TLS) (Chlorobium tepidum)).